The following is an 83-amino-acid chain: MKNVITAPKIGQSVFIPFVTKTDELTGKTERIKGAALIPFDTIDAVYAENERSNNGKTVFSVRVKSGDVVKVVQRNEKWEAVL.

This is an uncharacterized protein from Escherichia phage Bf23 (Enterobacteria phage BF23).